Reading from the N-terminus, the 36-residue chain is Glucagon (36 aa).

The protein belongs to the glucagon family. As to expression, produced by the X-cells of the islets of pancreas.

Its subcellular location is the secreted. In terms of biological role, promotes hydrolysis of glycogen and lipids, and raises the blood sugar level. This Hydrolagus colliei (Spotted ratfish) protein is Glucagon (gcg).